The following is a 361-amino-acid chain: 3-dehydroquinate synthase (361 aa).

Residues 72–77 (SGEKEK), 130–131 (TT), K142, and K151 each bind NAD(+). Zn(2+) contacts are provided by E184, H247, and H264.

The protein belongs to the sugar phosphate cyclases superfamily. Dehydroquinate synthase family. It depends on Co(2+) as a cofactor. Requires Zn(2+) as cofactor. NAD(+) serves as cofactor.

It localises to the cytoplasm. It catalyses the reaction 7-phospho-2-dehydro-3-deoxy-D-arabino-heptonate = 3-dehydroquinate + phosphate. The protein operates within metabolic intermediate biosynthesis; chorismate biosynthesis; chorismate from D-erythrose 4-phosphate and phosphoenolpyruvate: step 2/7. In terms of biological role, catalyzes the conversion of 3-deoxy-D-arabino-heptulosonate 7-phosphate (DAHP) to dehydroquinate (DHQ). In Bacillus cereus (strain AH820), this protein is 3-dehydroquinate synthase.